Consider the following 156-residue polypeptide: Small ribosomal subunit protein uS7 (156 aa).

Belongs to the universal ribosomal protein uS7 family. In terms of assembly, part of the 30S ribosomal subunit. Contacts proteins S9 and S11.

One of the primary rRNA binding proteins, it binds directly to 16S rRNA where it nucleates assembly of the head domain of the 30S subunit. Is located at the subunit interface close to the decoding center, probably blocks exit of the E-site tRNA. This Polynucleobacter asymbioticus (strain DSM 18221 / CIP 109841 / QLW-P1DMWA-1) (Polynucleobacter necessarius subsp. asymbioticus) protein is Small ribosomal subunit protein uS7.